The primary structure comprises 697 residues: Elongation factor G 1 (697 aa).

The 276-residue stretch at 8–283 folds into the tr-type G domain; the sequence is ERYRNFGIMA…AVVDFLPSPV (276 aa). GTP-binding positions include 17-24, 81-85, and 135-138; these read AHIDAGKT, DTPGH, and NKMD.

Belongs to the TRAFAC class translation factor GTPase superfamily. Classic translation factor GTPase family. EF-G/EF-2 subfamily.

Its subcellular location is the cytoplasm. Functionally, catalyzes the GTP-dependent ribosomal translocation step during translation elongation. During this step, the ribosome changes from the pre-translocational (PRE) to the post-translocational (POST) state as the newly formed A-site-bound peptidyl-tRNA and P-site-bound deacylated tRNA move to the P and E sites, respectively. Catalyzes the coordinated movement of the two tRNA molecules, the mRNA and conformational changes in the ribosome. The polypeptide is Elongation factor G 1 (Anaeromyxobacter dehalogenans (strain 2CP-C)).